Here is a 67-residue protein sequence, read N- to C-terminus: DNA gyrase inhibitor YacG (67 aa).

Cys10, Cys13, Cys29, and Cys33 together coordinate Zn(2+).

This sequence belongs to the DNA gyrase inhibitor YacG family. Interacts with GyrB. It depends on Zn(2+) as a cofactor.

Functionally, inhibits all the catalytic activities of DNA gyrase by preventing its interaction with DNA. Acts by binding directly to the C-terminal domain of GyrB, which probably disrupts DNA binding by the gyrase. The polypeptide is DNA gyrase inhibitor YacG (Pasteurella multocida (strain Pm70)).